The primary structure comprises 562 residues: Alpha-amylase 2 (562 aa).

Position 236 (Asn-236) interacts with Ca(2+). The Nucleophile role is filled by Asp-309. The active-site Proton donor is Glu-338.

The protein belongs to the glycosyl hydrolase 13 family. As to quaternary structure, monomer. The cofactor is Ca(2+).

The protein localises to the cytoplasm. The enzyme catalyses Endohydrolysis of (1-&gt;4)-alpha-D-glucosidic linkages in polysaccharides containing three or more (1-&gt;4)-alpha-linked D-glucose units.. This chain is Alpha-amylase 2 (amyB), found in Dictyoglomus thermophilum (strain ATCC 35947 / DSM 3960 / H-6-12).